Consider the following 386-residue polypeptide: Tryptophan--tRNA ligase (386 aa).

A 'HIGH' region motif is present at residues proline 82–histidine 90. Positions lysine 253–serine 257 match the 'KMSKS' region motif.

Belongs to the class-I aminoacyl-tRNA synthetase family.

It is found in the cytoplasm. The enzyme catalyses tRNA(Trp) + L-tryptophan + ATP = L-tryptophyl-tRNA(Trp) + AMP + diphosphate + H(+). This Pyrococcus horikoshii (strain ATCC 700860 / DSM 12428 / JCM 9974 / NBRC 100139 / OT-3) protein is Tryptophan--tRNA ligase.